Consider the following 327-residue polypeptide: ATP-dependent 6-phosphofructokinase (327 aa).

ATP is bound at residue Gly-12. ADP contacts are provided by residues Arg-22–Arg-26 and Arg-55–Asp-60. ATP-binding positions include Arg-73–Phe-74 and Gly-103–Ser-106. A Mg(2+)-binding site is contributed by Asp-104. Thr-127–Asp-129 lines the substrate pocket. Asp-129 functions as the Proton acceptor in the catalytic mechanism. Residue Arg-156 coordinates ADP. Residues Arg-164 and Met-171–Arg-173 each bind substrate. ADP is bound by residues Gly-187–Glu-189, Lys-213, and Lys-215–His-217. Substrate is bound by residues Glu-224, Arg-245, and His-251–Arg-254.

This sequence belongs to the phosphofructokinase type A (PFKA) family. ATP-dependent PFK group I subfamily. Prokaryotic clade 'B1' sub-subfamily. As to quaternary structure, homotetramer. Mg(2+) serves as cofactor.

It localises to the cytoplasm. It carries out the reaction beta-D-fructose 6-phosphate + ATP = beta-D-fructose 1,6-bisphosphate + ADP + H(+). It functions in the pathway carbohydrate degradation; glycolysis; D-glyceraldehyde 3-phosphate and glycerone phosphate from D-glucose: step 3/4. Allosterically activated by ADP and other diphosphonucleosides, and allosterically inhibited by phosphoenolpyruvate. Catalyzes the phosphorylation of D-fructose 6-phosphate to fructose 1,6-bisphosphate by ATP, the first committing step of glycolysis. This Yersinia pseudotuberculosis serotype IB (strain PB1/+) protein is ATP-dependent 6-phosphofructokinase.